Consider the following 207-residue polypeptide: Large ribosomal subunit protein bL25 (207 aa).

The disordered stretch occupies residues E171–E207. The span at E196–E207 shows a compositional bias: basic and acidic residues.

Belongs to the bacterial ribosomal protein bL25 family. CTC subfamily. Part of the 50S ribosomal subunit; part of the 5S rRNA/L5/L18/L25 subcomplex. Contacts the 5S rRNA. Binds to the 5S rRNA independently of L5 and L18.

Functionally, this is one of the proteins that binds to the 5S RNA in the ribosome where it forms part of the central protuberance. This chain is Large ribosomal subunit protein bL25, found in Listeria monocytogenes serotype 4b (strain F2365).